The sequence spans 2169 residues: Voltage-dependent L-type calcium channel subunit alpha-1C (2169 aa).

The Cytoplasmic segment spans residues 1–153; it reads MVPLVQPTTP…RACISIVEWK (153 aa). A calmodulin-binding region spans residues 76–97; the sequence is GAALSWQAAIDAGRQAKLMGSA. A compositionally biased stretch (polar residues) spans 98-108; it reads GNTTISTVSST. Residues 98–127 form a disordered region; sequence GNTTISTVSSTQRKRQQYGKPKKQSGTTAT. Residues 109-120 are compositionally biased toward basic residues; the sequence is QRKRQQYGKPKK. Residues 140–437 form an I repeat; that stretch reads NPIRRACISI…LVLGVLSGEF (298 aa). The helical transmembrane segment at 154–172 threads the bilayer; it reads PFEIIILLTIFANCVALAI. Residues 173–187 lie on the Extracellular side of the membrane; that stretch reads YIPFPEDDSNATNSN. The N-linked (GlcNAc...) asparagine glycan is linked to asparagine 182. The chain crosses the membrane as a helical span at residues 188–208; the sequence is LERVEYLFLIIFTVEAFLKVI. Residues 209–217 are Cytoplasmic-facing; the sequence is AYGLLFHPN. The chain crosses the membrane as a helical span at residues 218–238; the sequence is AYLRNGWNLLDFIIVVVGLFS. The Extracellular portion of the chain corresponds to 239-261; sequence AILEQATKADGANALGGKGAGFD. Residues 262 to 280 form a helical membrane-spanning segment; it reads VKALRAFRVLRPLRLVSGV. Residues 281–297 are Cytoplasmic-facing; the sequence is PSLQVVLNSIIKAMVPL. The chain crosses the membrane as a helical span at residues 298 to 319; that stretch reads LHTALLVLFVIIIYAIIGLELF. The Extracellular portion of the chain corresponds to 320-379; sequence MGKMHKTCYNQEGITDVPAEEDPSPCALESGHGRQCQNGTVCKPGWDGPKHGITNFDNFA. Cysteine 345 and cysteine 361 form a disulfide bridge. The N-linked (GlcNAc...) asparagine glycan is linked to asparagine 357. An intramembrane region (pore-forming) is located at residues 380–401; that stretch reads FAMLTVFQCITMEGWTDVLYWM. Positions 390-393 match the Selectivity filter of repeat I motif; sequence TMEG. Residue glutamate 392 coordinates Ca(2+). Topologically, residues 402-409 are extracellular; it reads QDAMGYEL. A helical membrane pass occupies residues 410–430; it reads PWVYFVSLVIFGSFFVLNLVL. Residues 431–553 lie on the Cytoplasmic side of the membrane; sequence GVLSGEFSKE…RKCRAAVKSN (123 aa). Residues 457 to 474 are AID/alpha-interaction domain; mediates interaction with the beta subunit; that stretch reads QQLEEDLKGYLDWITQAE. The tract at residues 478 to 510 is disordered; the sequence is PENEDEGVDEEKPRNMSMPTSETESVNTENVAG. The segment covering 494–507 has biased composition (polar residues); sequence SMPTSETESVNTEN. At serine 498 the chain carries Phosphoserine. Threonine 505 bears the Phosphothreonine mark. One copy of the II repeat lies at 539–785; the sequence is NRFCRRKCRA…VFLAIAVDNL (247 aa). Residues 554–572 form a helical membrane-spanning segment; sequence VFYWLVIFLVFLNTLTIAS. Residues 573-583 are Extracellular-facing; that stretch reads EHYNQPHWLTE. A helical membrane pass occupies residues 584-604; the sequence is VQDTANKALLALFTAEMLLKM. Topologically, residues 605–615 are cytoplasmic; the sequence is YSLGLQAYFVS. Residues 616–635 form a helical membrane-spanning segment; sequence LFNRLDCFIVCGGILETILV. The Extracellular portion of the chain corresponds to 636–644; that stretch reads ETKIMSPLG. Residues 645–663 traverse the membrane as a helical segment; that stretch reads ISVLRCVRLLRIFKITRYW. At 664–682 the chain is on the cytoplasmic side; the sequence is NSLSNLVASLLNSVRSIAS. Residues 683 to 702 traverse the membrane as a helical segment; that stretch reads LLLLLFLFIIIFSLLGMQLF. At 703 to 722 the chain is on the extracellular side; the sequence is GGKFNFDEMRTRRSTFDNFP. An intramembrane region (pore-forming) is located at residues 723–744; the sequence is QSLLTVFQILTGEDWNSVMYDG. The Selectivity filter of repeat II motif lies at 733 to 736; that stretch reads TGED. Glutamate 735 contacts Ca(2+). The Extracellular segment spans residues 745 to 754; sequence IMAYGGPSFP. A helical transmembrane segment spans residues 755–774; that stretch reads GMLVCIYFIILFICGNYILL. The Cytoplasmic portion of the chain corresponds to 775 to 929; sequence NVFLAIAVDN…LQCHRIVNDT (155 aa). Positions 793 to 890 are disordered; sequence SAQKEEEEEK…EMPVGPRPRP (98 aa). The span at 812-835 shows a compositional bias: basic and acidic residues; it reads SPEKKQEVVEKPAVEETKEEKIEL. A phosphoserine mark is found at serine 837 and serine 844. The segment at 858–905 is interaction with STAC2; that stretch reads NENEDKSPYPNPDAAGEEDEEEPEMPVGPRPRPLSELHLKEKAVPMPE. Residues 872–881 show a composition bias toward acidic residues; sequence AGEEDEEEPE. An III repeat occupies 916 to 1198; it reads NRFRLQCHRI…IFVGFVIVTF (283 aa). A helical membrane pass occupies residues 930 to 948; that stretch reads IFTNLILFFILLSSISLAA. The Extracellular segment spans residues 949–960; the sequence is EDPVQHTSFRNH. The chain crosses the membrane as a helical span at residues 961–980; that stretch reads ILFYFDIVFTTIFTIEIALK. The Cytoplasmic portion of the chain corresponds to 981-996; sequence MTAYGAFLHKGSFCRN. A helical membrane pass occupies residues 997–1015; sequence YFNILDLLVVSVSLISFGI. Residues 1016–1022 are Extracellular-facing; it reads QSSAINV. A helical transmembrane segment spans residues 1023–1041; it reads VKILRVLRVLRPLRAINRA. At 1042–1060 the chain is on the cytoplasmic side; the sequence is KGLKHVVQCVFVAIRTIGN. The helical transmembrane segment at 1061–1080 threads the bilayer; the sequence is IVIVTTLLQFMFACIGVQLF. The Extracellular segment spans residues 1081 to 1130; sequence KGKLYTCSDSSKQTEAECKGNYITYKDGEVDQPIIQPRSWENSKFDFDNV. A disulfide bridge links cysteine 1087 with cysteine 1098. Positions 1118-1207 are dihydropyridine binding; that stretch reads RSWENSKFDF…FQEQGEQEYK (90 aa). The segment at residues 1131-1151 is an intramembrane region (pore-forming); the sequence is LAAMMALFTVSTFEGWPELLY. Positions 1142–1145 match the Selectivity filter of repeat III motif; that stretch reads TFEG. Position 1144 (glutamate 1144) interacts with Ca(2+). Residues 1152–1168 are Extracellular-facing; it reads RSIDSHTEDKGPIYNYR. A helical transmembrane segment spans residues 1169-1190; that stretch reads VEISIFFIIYIIIIAFFMMNIF. Topologically, residues 1191-1248 are cytoplasmic; the sequence is VGFVIVTFQEQGEQEYKNCELDKNQRQCVEYALKARPLRRYIPKNQHQYKVWYVVNST. The stretch at 1235–1508 is one IV repeat; sequence NQHQYKVWYV…LFVAVVMDNF (274 aa). A helical membrane pass occupies residues 1249–1270; the sequence is YFEYLMFVLILLNTICLAMQHY. The Extracellular segment spans residues 1271 to 1278; sequence GQSCLFKI. A helical membrane pass occupies residues 1279–1300; sequence AMNILNMLFTGLFTVEMILKLI. The Cytoplasmic portion of the chain corresponds to 1301-1310; it reads AFKPKHYFCD. Residues 1311-1330 traverse the membrane as a helical segment; that stretch reads AWNTFDALIVVGSIVDIAIT. At 1331 to 1353 the chain is on the extracellular side; sequence EVNPAEHTQCSPSMNAEENSRIS. The helical transmembrane segment at 1354 to 1372 threads the bilayer; the sequence is ITFFRLFRVMRLVKLLSRG. The Cytoplasmic portion of the chain corresponds to 1373 to 1390; that stretch reads EGIRTLLWTFIKSFQALP. Residues 1391–1411 form a helical membrane-spanning segment; sequence YVALLIVMLFFIYAVIGMQVF. The Extracellular portion of the chain corresponds to 1412–1433; sequence GKIALNDTTEINRNNNFQTFPQ. Asparagine 1417 carries an N-linked (GlcNAc...) asparagine glycan. Residues 1434 to 1452 constitute an intramembrane region (pore-forming); sequence AVLLLFRCATGEAWQDIML. Positions 1443 to 1446 match the Selectivity filter of repeat IV motif; that stretch reads TGEA. The Extracellular portion of the chain corresponds to 1453-1480; sequence ACMPGKKCAPESDPSNSTEGETPCGSSF. Residues 1459-1527 form a dihydropyridine binding region; the sequence is KCAPESDPSN…LGPHHLDEFK (69 aa). A disulfide bridge connects residues cysteine 1460 and cysteine 1476. An N-linked (GlcNAc...) asparagine glycan is attached at asparagine 1468. The segment at 1473–1515 is phenylalkylamine binding; it reads ETPCGSSFAVFYFISFYMLCAFLIINLFVAVVMDNFDYLTRDW. A helical membrane pass occupies residues 1481 to 1505; that stretch reads AVFYFISFYMLCAFLIINLFVAVVM. Residues 1506–2169 lie on the Cytoplasmic side of the membrane; the sequence is DNFDYLTRDW…ADSRVHVRSL (664 aa). Residues 1640–1667 form an important for interaction with STAC1, STAC2 and STAC3 region; that stretch reads DEVTVGKFYATFLIQEYFRKFKKRKEQG. The calmodulin-binding IQ region stretch occupies residues 1646 to 1666; sequence KFYATFLIQEYFRKFKKRKEQ. Residues 1680-1699 form an important for localization in at the junctional membrane region; sequence LQAGLRTLHDIGPEIRRAIS. A phosphoserine mark is found at serine 1699 and serine 1720. 2 disordered regions span residues 1761-1793 and 1894-1920; these read KAGN…TGSN and ENRQ…LRSA. Residues 1780-1792 show a composition bias toward polar residues; the sequence is STFTPSSYSSTGS. The segment covering 1894 to 1910 has biased composition (basic and acidic residues); sequence ENRQLTPPEEDKGDTRP. Serine 1927 is subject to Phosphoserine.

The protein belongs to the calcium channel alpha-1 subunit (TC 1.A.1.11) family. CACNA1C subfamily. Component of a calcium channel complex consisting of a pore-forming alpha subunit (CACNA1C) and ancillary beta, gamma and delta subunits. The channel complex contains alpha, beta, gamma and delta subunits in a 1:1:1:1 ratio, i.e. it contains only one of each type of subunit. CACNA1C channel activity is modulated by ancillary subunits, such as CACNB1, CACNB2, CACNB3, CACNA2D1 and CACNA2D4. Interacts with CACNB1. Interacts with CACNB2. Identified in a complex with CACNA2D4 and CACNB3. Interacts with CACNB3. Interacts with CACNA2D1. Interacts with CACNA2D4. Interacts with the gamma subunits CACNG4, CACNG6, CACNG7 and CACNG8. Interacts with CALM1. Interacts (via the N-terminus and the C-terminal C and IQ motifs) with CABP1; this inhibits Ca(2+)-dependent channel inactivation. The binding via the C motif is calcium independent whereas the binding via IQ requires the presence of calcium and is mutually exclusive with calmodulin binding. The binding to the cytoplasmic N-terminal domain is calcium independent but is essential for the channel modulation. Interacts (via C-terminal CDB motif) with CABP5; in a calcium-dependent manner. Interacts with CIB1; the interaction increases upon cardiomyocytes hypertrophy. Interacts with STAC2 and STAC3; this inhibits channel inactivation. In terms of processing, phosphorylation by PKA at Ser-1927 activates the channel. Elevated levels of blood glucose lead to increased phosphorylation by PKA. Expressed in heart. Expressed in uterus.

The protein localises to the cell membrane. The protein resides in the sarcolemma. It is found in the perikaryon. Its subcellular location is the postsynaptic density membrane. It localises to the cell projection. The protein localises to the dendrite. The protein resides in the T-tubule. The enzyme catalyses Ca(2+)(in) = Ca(2+)(out). Inhibited by dihydropyridines (DHP), such as isradipine. Inhibited by nifedipine. Channel activity is regulated by Ca(2+) and calmodulin. Binding of STAC1, STAC2 or STAC3 to a region that overlaps with the calmodulin binding site inhibits channel inactivation by Ca(2+) and calmodulin. Binding of calmodulin or CABP1 at the same regulatory sites results in opposite effects on the channel function. Shear stress and pressure increases calcium channel activity. Its function is as follows. Pore-forming, alpha-1C subunit of the voltage-gated calcium channel that gives rise to L-type calcium currents. Mediates influx of calcium ions into the cytoplasm, and thereby triggers calcium release from the sarcoplasm. Plays an important role in excitation-contraction coupling in the heart. Required for normal heart development and normal regulation of heart rhythm. Required for normal contraction of smooth muscle cells in blood vessels and in the intestine. Essential for normal blood pressure regulation via its role in the contraction of arterial smooth muscle cells. Long-lasting (L-type) calcium channels belong to the 'high-voltage activated' (HVA) group. The polypeptide is Voltage-dependent L-type calcium channel subunit alpha-1C (CACNA1C) (Cavia porcellus (Guinea pig)).